Consider the following 66-residue polypeptide: Large ribosomal subunit protein uL29 (66 aa).

The protein belongs to the universal ribosomal protein uL29 family.

In Petrotoga mobilis (strain DSM 10674 / SJ95), this protein is Large ribosomal subunit protein uL29.